A 139-amino-acid polypeptide reads, in one-letter code: Large ribosomal subunit protein uL16 (139 aa).

The tract at residues 1–23 (MLQPARTKYRKMHKGRMPGSAHR) is disordered. The span at 7–16 (TKYRKMHKGR) shows a compositional bias: basic residues.

It belongs to the universal ribosomal protein uL16 family. In terms of assembly, part of the 50S ribosomal subunit.

In terms of biological role, binds 23S rRNA and is also seen to make contacts with the A and possibly P site tRNAs. This is Large ribosomal subunit protein uL16 from Myxococcus xanthus (strain DK1622).